The sequence spans 122 residues: Holo-[acyl-carrier-protein] synthase (122 aa).

Residues Asp8 and Glu57 each contribute to the Mg(2+) site.

The protein belongs to the P-Pant transferase superfamily. AcpS family. Mg(2+) is required as a cofactor.

It is found in the cytoplasm. It catalyses the reaction apo-[ACP] + CoA = holo-[ACP] + adenosine 3',5'-bisphosphate + H(+). In terms of biological role, transfers the 4'-phosphopantetheine moiety from coenzyme A to a Ser of acyl-carrier-protein. This chain is Holo-[acyl-carrier-protein] synthase, found in Exiguobacterium sp. (strain ATCC BAA-1283 / AT1b).